The sequence spans 364 residues: 4-hydroxythreonine-4-phosphate dehydrogenase (364 aa).

2 residues coordinate substrate: His-148 and Thr-149. 3 residues coordinate a divalent metal cation: His-177, His-216, and His-301. Residues Lys-309, Asn-318, and Arg-327 each coordinate substrate.

Belongs to the PdxA family. Homodimer. Zn(2+) serves as cofactor. Requires Mg(2+) as cofactor. The cofactor is Co(2+).

The protein localises to the cytoplasm. It catalyses the reaction 4-(phosphooxy)-L-threonine + NAD(+) = 3-amino-2-oxopropyl phosphate + CO2 + NADH. The protein operates within cofactor biosynthesis; pyridoxine 5'-phosphate biosynthesis; pyridoxine 5'-phosphate from D-erythrose 4-phosphate: step 4/5. Catalyzes the NAD(P)-dependent oxidation of 4-(phosphooxy)-L-threonine (HTP) into 2-amino-3-oxo-4-(phosphooxy)butyric acid which spontaneously decarboxylates to form 3-amino-2-oxopropyl phosphate (AHAP). The protein is 4-hydroxythreonine-4-phosphate dehydrogenase of Campylobacter jejuni subsp. jejuni serotype O:23/36 (strain 81-176).